Consider the following 91-residue polypeptide: Protein translocase subunit SecG (91 aa).

2 consecutive transmembrane segments (helical) span residues 16–36 (HTFLIVLLIIDCIALITVVLL) and 71–91 (LTIILSILFFVLMICISYLGM).

The protein belongs to the SecG family. Component of the Sec protein translocase complex. Heterotrimer consisting of SecY, SecE and SecG subunits. The heterotrimers can form oligomers, although 1 heterotrimer is thought to be able to translocate proteins. Interacts with SecDF, and other proteins may be involved. The channel interacts with SecA via subunit SecY. Also part of the accessory SecA2/SecY2 protein translocation apparatus required to export cell wall protein GspB.

It is found in the cell membrane. Functionally, subunit of the protein translocation channel SecYEG. While not essential, it considerably increases the export efficiency of extracellular proteins. This chain is Protein translocase subunit SecG, found in Staphylococcus aureus (strain NCTC 8325 / PS 47).